The chain runs to 319 residues: 4-diphosphocytidyl-2-C-methyl-D-erythritol kinase (319 aa).

Lys-21 is a catalytic residue. 106–116 (PIGAGLAGGSS) serves as a coordination point for ATP. Residue Asp-148 is part of the active site.

It belongs to the GHMP kinase family. IspE subfamily.

The enzyme catalyses 4-CDP-2-C-methyl-D-erythritol + ATP = 4-CDP-2-C-methyl-D-erythritol 2-phosphate + ADP + H(+). It participates in isoprenoid biosynthesis; isopentenyl diphosphate biosynthesis via DXP pathway; isopentenyl diphosphate from 1-deoxy-D-xylulose 5-phosphate: step 3/6. Functionally, catalyzes the phosphorylation of the position 2 hydroxy group of 4-diphosphocytidyl-2C-methyl-D-erythritol. This Prochlorococcus marinus (strain MIT 9303) protein is 4-diphosphocytidyl-2-C-methyl-D-erythritol kinase.